The chain runs to 166 residues: Endoribonuclease YbeY (166 aa).

His-111, His-115, and His-121 together coordinate Zn(2+). The tract at residues 141 to 166 is disordered; that stretch reads LGYPDPYADDESADHPHSDTPSKDHE. Positions 153–166 are enriched in basic and acidic residues; sequence ADHPHSDTPSKDHE.

The protein belongs to the endoribonuclease YbeY family. Zn(2+) is required as a cofactor.

It is found in the cytoplasm. Single strand-specific metallo-endoribonuclease involved in late-stage 70S ribosome quality control and in maturation of the 3' terminus of the 16S rRNA. In Pseudomonas syringae pv. tomato (strain ATCC BAA-871 / DC3000), this protein is Endoribonuclease YbeY.